Here is a 310-residue protein sequence, read N- to C-terminus: tRNA-cytidine(32) 2-sulfurtransferase (310 aa).

The PP-loop motif motif lies at 45–50; it reads SGGKDS. Residues cysteine 120, cysteine 123, and cysteine 211 each coordinate [4Fe-4S] cluster.

It belongs to the TtcA family. In terms of assembly, homodimer. Mg(2+) serves as cofactor. It depends on [4Fe-4S] cluster as a cofactor.

Its subcellular location is the cytoplasm. It catalyses the reaction cytidine(32) in tRNA + S-sulfanyl-L-cysteinyl-[cysteine desulfurase] + AH2 + ATP = 2-thiocytidine(32) in tRNA + L-cysteinyl-[cysteine desulfurase] + A + AMP + diphosphate + H(+). It functions in the pathway tRNA modification. Its function is as follows. Catalyzes the ATP-dependent 2-thiolation of cytidine in position 32 of tRNA, to form 2-thiocytidine (s(2)C32). The sulfur atoms are provided by the cysteine/cysteine desulfurase (IscS) system. In Shewanella baltica (strain OS185), this protein is tRNA-cytidine(32) 2-sulfurtransferase.